The primary structure comprises 304 residues: D-alanine--D-alanine ligase (304 aa).

One can recognise an ATP-grasp domain in the interval 99–293 (KKILRYEGIE…YSKLLDMIIE (195 aa)). An ATP-binding site is contributed by 126–181 (LDKLGFPLVVKPNSGGSSVGVKIVYDKDELISMLETVFEWDSEVVIEKYIKGEEIT). Residues D248, E260, and N262 each coordinate Mg(2+).

This sequence belongs to the D-alanine--D-alanine ligase family. Requires Mg(2+) as cofactor. Mn(2+) serves as cofactor.

Its subcellular location is the cytoplasm. It catalyses the reaction 2 D-alanine + ATP = D-alanyl-D-alanine + ADP + phosphate + H(+). The protein operates within cell wall biogenesis; peptidoglycan biosynthesis. Its function is as follows. Cell wall formation. The chain is D-alanine--D-alanine ligase from Bacillus anthracis (strain A0248).